The primary structure comprises 138 residues: Nucleoside diphosphate kinase (138 aa).

Lys-9, Phe-57, Arg-85, Thr-91, Arg-102, and Asn-112 together coordinate ATP. His-115 (pros-phosphohistidine intermediate) is an active-site residue.

This sequence belongs to the NDK family. In terms of assembly, homotetramer. It depends on Mg(2+) as a cofactor.

The protein resides in the cytoplasm. It carries out the reaction a 2'-deoxyribonucleoside 5'-diphosphate + ATP = a 2'-deoxyribonucleoside 5'-triphosphate + ADP. The enzyme catalyses a ribonucleoside 5'-diphosphate + ATP = a ribonucleoside 5'-triphosphate + ADP. Functionally, major role in the synthesis of nucleoside triphosphates other than ATP. The ATP gamma phosphate is transferred to the NDP beta phosphate via a ping-pong mechanism, using a phosphorylated active-site intermediate. This Trichlorobacter lovleyi (strain ATCC BAA-1151 / DSM 17278 / SZ) (Geobacter lovleyi) protein is Nucleoside diphosphate kinase.